The primary structure comprises 469 residues: 3-isopropylmalate dehydratase large subunit (469 aa).

Cys-347, Cys-408, and Cys-411 together coordinate [4Fe-4S] cluster.

This sequence belongs to the aconitase/IPM isomerase family. LeuC type 1 subfamily. As to quaternary structure, heterodimer of LeuC and LeuD. It depends on [4Fe-4S] cluster as a cofactor.

The enzyme catalyses (2R,3S)-3-isopropylmalate = (2S)-2-isopropylmalate. It participates in amino-acid biosynthesis; L-leucine biosynthesis; L-leucine from 3-methyl-2-oxobutanoate: step 2/4. In terms of biological role, catalyzes the isomerization between 2-isopropylmalate and 3-isopropylmalate, via the formation of 2-isopropylmaleate. This chain is 3-isopropylmalate dehydratase large subunit, found in Actinobacillus pleuropneumoniae serotype 7 (strain AP76).